A 474-amino-acid chain; its full sequence is tRNA-2-methylthio-N(6)-dimethylallyladenosine synthase (474 aa).

The MTTase N-terminal domain occupies 3 to 120; that stretch reads KKLHIKTWGC…LPEMINHVQG (118 aa). 6 residues coordinate [4Fe-4S] cluster: cysteine 12, cysteine 49, cysteine 83, cysteine 157, cysteine 161, and cysteine 164. Residues 143–375 enclose the Radical SAM core domain; that stretch reads RAEGPTAFVS…QQRISQQAME (233 aa). The region spanning 378–441 is the TRAM domain; that stretch reads RKMVGTVQRV…ASSLRGILLR (64 aa).

Belongs to the methylthiotransferase family. MiaB subfamily. As to quaternary structure, monomer. The cofactor is [4Fe-4S] cluster.

Its subcellular location is the cytoplasm. The enzyme catalyses N(6)-dimethylallyladenosine(37) in tRNA + (sulfur carrier)-SH + AH2 + 2 S-adenosyl-L-methionine = 2-methylsulfanyl-N(6)-dimethylallyladenosine(37) in tRNA + (sulfur carrier)-H + 5'-deoxyadenosine + L-methionine + A + S-adenosyl-L-homocysteine + 2 H(+). Its function is as follows. Catalyzes the methylthiolation of N6-(dimethylallyl)adenosine (i(6)A), leading to the formation of 2-methylthio-N6-(dimethylallyl)adenosine (ms(2)i(6)A) at position 37 in tRNAs that read codons beginning with uridine. The chain is tRNA-2-methylthio-N(6)-dimethylallyladenosine synthase from Yersinia pestis bv. Antiqua (strain Antiqua).